A 205-amino-acid chain; its full sequence is MFESRPDRDAEVVLIGRSNVGKSTLMREITGHTFDTGQRPGVTRSPNHFDWASADFVISDLPGFGFMKGVPEDVREEIKTDVVQYVERNAEHILVGILVVDGKSVIDIIDRHSGPDEIPHDVEMFHFLREVGVEPVVAVNKMDKVDDKDARLNELCDRLGLHPPWQQWQETIAPISAKHGSTEPLNEAVRHHLHEVQRDDLFQFF.

The 188-residue stretch at 8 to 195 (RDAEVVLIGR…NEAVRHHLHE (188 aa)) folds into the EngB-type G domain. Residues 16-23 (GRSNVGKS), 41-45 (GVTRS), 60-63 (DLPG), 140-143 (NKMD), and 175-177 (ISA) each bind GTP. The Mg(2+) site is built by Ser23 and Thr43.

This sequence belongs to the TRAFAC class TrmE-Era-EngA-EngB-Septin-like GTPase superfamily. EngB GTPase family. Requires Mg(2+) as cofactor.

Its function is as follows. Necessary for normal cell division and for the maintenance of normal septation. This is Probable GTP-binding protein EngB from Haloarcula marismortui (strain ATCC 43049 / DSM 3752 / JCM 8966 / VKM B-1809) (Halobacterium marismortui).